A 416-amino-acid chain; its full sequence is Tyrosine--tRNA ligase (416 aa).

A 'HIGH' region motif is present at residues 55–64 (PTGSEIHLGH). The 'KMSKS' region signature appears at 249–253 (KMSKS). Residue Lys252 participates in ATP binding. An S4 RNA-binding domain is found at 352–416 (TKAFHLLSSI…GKKTFRRISN (65 aa)).

This sequence belongs to the class-I aminoacyl-tRNA synthetase family. TyrS type 2 subfamily. Homodimer.

Its subcellular location is the cytoplasm. It catalyses the reaction tRNA(Tyr) + L-tyrosine + ATP = L-tyrosyl-tRNA(Tyr) + AMP + diphosphate + H(+). In terms of biological role, catalyzes the attachment of tyrosine to tRNA(Tyr) in a two-step reaction: tyrosine is first activated by ATP to form Tyr-AMP and then transferred to the acceptor end of tRNA(Tyr). The polypeptide is Tyrosine--tRNA ligase (Prochlorococcus marinus (strain SARG / CCMP1375 / SS120)).